Consider the following 363-residue polypeptide: Ribosome-binding ATPase YchF (363 aa).

An OBG-type G domain is found at 3-256; the sequence is FKCGIVGLPN…LEDEEKVDFL (254 aa). Position 12–17 (12–17) interacts with ATP; that stretch reads NVGKST. Mg(2+) is bound by residues Ser16 and Thr36. One can recognise a TGS domain in the interval 278 to 361; it reads NLQTYFTAGV…QDGDVMHFRF (84 aa).

It belongs to the TRAFAC class OBG-HflX-like GTPase superfamily. OBG GTPase family. YchF/OLA1 subfamily. Mg(2+) serves as cofactor.

ATPase that binds to both the 70S ribosome and the 50S ribosomal subunit in a nucleotide-independent manner. The protein is Ribosome-binding ATPase YchF of Haemophilus ducreyi (strain 35000HP / ATCC 700724).